Consider the following 317-residue polypeptide: Beta-ketoacyl-[acyl-carrier-protein] synthase III (317 aa).

Catalysis depends on residues Cys112 and His244. The segment at 245-249 (QANLR) is ACP-binding. The active site involves Asn274.

This sequence belongs to the thiolase-like superfamily. FabH family. Homodimer.

Its subcellular location is the cytoplasm. The enzyme catalyses malonyl-[ACP] + acetyl-CoA + H(+) = 3-oxobutanoyl-[ACP] + CO2 + CoA. It participates in lipid metabolism; fatty acid biosynthesis. Catalyzes the condensation reaction of fatty acid synthesis by the addition to an acyl acceptor of two carbons from malonyl-ACP. Catalyzes the first condensation reaction which initiates fatty acid synthesis and may therefore play a role in governing the total rate of fatty acid production. Possesses both acetoacetyl-ACP synthase and acetyl transacylase activities. Its substrate specificity determines the biosynthesis of branched-chain and/or straight-chain of fatty acids. In Salmonella arizonae (strain ATCC BAA-731 / CDC346-86 / RSK2980), this protein is Beta-ketoacyl-[acyl-carrier-protein] synthase III.